The chain runs to 239 residues: Orotidine 5'-phosphate decarboxylase (239 aa).

Residues D11, K33, 60-69 (DLKLHDIPTT), T123, R185, Q194, G214, and R215 contribute to the substrate site. The Proton donor role is filled by K62.

This sequence belongs to the OMP decarboxylase family. Type 1 subfamily. Homodimer.

It carries out the reaction orotidine 5'-phosphate + H(+) = UMP + CO2. It participates in pyrimidine metabolism; UMP biosynthesis via de novo pathway; UMP from orotate: step 2/2. Catalyzes the decarboxylation of orotidine 5'-monophosphate (OMP) to uridine 5'-monophosphate (UMP). This Bacillus subtilis (strain 168) protein is Orotidine 5'-phosphate decarboxylase (pyrF).